The sequence spans 385 residues: Cell division protein FtsZ (385 aa).

Residues glycine 37 to asparagine 41, glycine 125 to glycine 127, glutamate 156, lysine 160, and aspartate 204 contribute to the GTP site.

The protein belongs to the FtsZ family. In terms of assembly, homodimer. Polymerizes to form a dynamic ring structure in a strictly GTP-dependent manner. Interacts directly with several other division proteins.

It is found in the cytoplasm. Its function is as follows. Essential cell division protein that forms a contractile ring structure (Z ring) at the future cell division site. The regulation of the ring assembly controls the timing and the location of cell division. One of the functions of the FtsZ ring is to recruit other cell division proteins to the septum to produce a new cell wall between the dividing cells. Binds GTP and shows GTPase activity. The polypeptide is Cell division protein FtsZ (Helicobacter pylori (strain J99 / ATCC 700824) (Campylobacter pylori J99)).